A 430-amino-acid chain; its full sequence is Keratin, type I cytoskeletal 18 (430 aa).

An N-acetylserine modification is found at S2. Residues S2–N79 form a head region. Residues S7, S10, S15, and S18 each carry the phosphoserine modification. 2 positions are modified to phosphoserine; alternate: S30 and S31. O-linked (GlcNAc) serine; alternate glycans are attached at residues S30 and S31. S34 carries the phosphoserine; by CDK1 modification. Y36 carries the post-translational modification Phosphotyrosine. Phosphoserine is present on S42. Position 45 is an omega-N-methylarginine (R45). The residue at position 49 (S49) is a Phosphoserine; alternate. An O-linked (GlcNAc) serine; alternate glycan is attached at S49. The residue at position 51 (S51) is a Phosphoserine; by MAPKAPK2 and MAPKAPK3. T52 carries the phosphothreonine modification. At S53 the chain carries Phosphoserine; by CAMK, PKC/PRKCE and AURKA. R55 bears the Omega-N-methylarginine mark. S60 bears the Phosphoserine mark. At T65 the chain carries Phosphothreonine. Residues G70–L373 are necessary for interaction with PNN. The interval I77–H128 is interaction with TRADD. Residues E80–H115 form a coil 1A region. Residues E80–N391 form the IF rod domain. A Glycyl lysine isopeptide (Lys-Gly) (interchain with G-Cter in SUMO2) cross-link involves residue K81. A phosphoserine mark is found at S93 and S100. Residues L116–I132 are linker 1. K131 bears the N6-acetyllysine mark. Positions I133–L224 are coil 1B. A Phosphoserine modification is found at S177. Residues Q225–I248 form a linker 12 region. The tract at residues Q243 to N391 is interaction with DNAJB6. K247 is covalently cross-linked (Glycyl lysine isopeptide (Lys-Gly) (interchain with G-Cter in SUMO2)). The interval M249 to G387 is coil 2. The residue at position 302 (T302) is a Phosphothreonine. 3 positions are modified to phosphoserine: S305, S319, and S323. Residues K370 and K372 each participate in a glycyl lysine isopeptide (Lys-Gly) (interchain with G-Cter in SUMO2) cross-link. Positions E388 to H430 are tail. Phosphoserine occurs at positions 398, 399, and 401. T404 bears the Phosphothreonine mark. Residue K417 forms a Glycyl lysine isopeptide (Lys-Gly) (interchain with G-Cter in SUMO2) linkage. K426 carries the post-translational modification N6-acetyllysine; alternate. A Glycyl lysine isopeptide (Lys-Gly) (interchain with G-Cter in SUMO1); alternate cross-link involves residue K426. A Glycyl lysine isopeptide (Lys-Gly) (interchain with G-Cter in SUMO2); alternate cross-link involves residue K426.

It belongs to the intermediate filament family. As to quaternary structure, heterotetramer of two type I and two type II keratins. KRT18 associates with KRT8. Interacts with PLEC isoform 1C, when in a heterodimer with KRT8. Interacts with the thrombin-antithrombin complex. Interacts with PNN and mutated CFTR. Interacts with YWHAE, YWHAH and YWHAZ only when phosphorylated. Interacts with DNAJB6, TCHP and TRADD. Interacts with FAM83H. Interacts with EPPK1. Interacts with PKP1 and PKP2. In terms of assembly, (Microbial infection) Interacts with hepatitis C virus/HCV core protein. Phosphorylation at Ser-34 increases during mitosis. Hyperphosphorylated at Ser-53 in diseased cirrhosis liver. Phosphorylation increases by IL-6. In terms of processing, proteolytically cleaved by caspases during epithelial cell apoptosis. Cleavage occurs at Asp-238 by either caspase-3, caspase-6 or caspase-7. Post-translationally, O-GlcNAcylation increases solubility, and decreases stability by inducing proteasomal degradation. As to expression, expressed in colon, placenta, liver and very weakly in exocervix. Increased expression observed in lymph nodes of breast carcinoma.

The protein localises to the nucleus matrix. It is found in the cytoplasm. The protein resides in the perinuclear region. It localises to the nucleus. Its subcellular location is the nucleolus. Involved in the uptake of thrombin-antithrombin complexes by hepatic cells. When phosphorylated, plays a role in filament reorganization. Involved in the delivery of mutated CFTR to the plasma membrane. Together with KRT8, is involved in interleukin-6 (IL-6)-mediated barrier protection. The chain is Keratin, type I cytoskeletal 18 (KRT18) from Homo sapiens (Human).